Consider the following 161-residue polypeptide: MPSFDVVSELDKHEVQNAVDNAIKELDRRYDLKGKGTFEFKDKEQTVMLTAEEEFQLEAMLEILRLALVKRKIDVKCLETKDPYASGKEKKQEAKFREGIDKDLAKKIVATIKDGKLKVQAAIQGEQVRVTGKKRDDLQEAIALLRTKEFDMPLQFNNFRD.

This sequence belongs to the YajQ family.

In terms of biological role, nucleotide-binding protein. The sequence is that of Nucleotide-binding protein Pput_4372 from Pseudomonas putida (strain ATCC 700007 / DSM 6899 / JCM 31910 / BCRC 17059 / LMG 24140 / F1).